The primary structure comprises 227 residues: Lipoprotein-releasing system ATP-binding protein LolD (227 aa).

The region spanning 5–227 is the ABC transporter domain; sequence LICQNITKHY…QDGILRESNS (223 aa). 41–48 serves as a coordination point for ATP; that stretch reads GSSGSGKS.

Belongs to the ABC transporter superfamily. Lipoprotein translocase (TC 3.A.1.125) family. In terms of assembly, the complex is composed of two ATP-binding proteins (LolD) and two transmembrane proteins (LolC and LolE).

It localises to the cell inner membrane. In terms of biological role, part of the ABC transporter complex LolCDE involved in the translocation of mature outer membrane-directed lipoproteins, from the inner membrane to the periplasmic chaperone, LolA. Responsible for the formation of the LolA-lipoprotein complex in an ATP-dependent manner. In Histophilus somni (strain 129Pt) (Haemophilus somnus), this protein is Lipoprotein-releasing system ATP-binding protein LolD.